We begin with the raw amino-acid sequence, 382 residues long: Mannitol-1-phosphate 5-dehydrogenase (382 aa).

3 to 14 contacts NAD(+); it reads ALHFGAGNIGRG.

It belongs to the mannitol dehydrogenase family.

The enzyme catalyses D-mannitol 1-phosphate + NAD(+) = beta-D-fructose 6-phosphate + NADH + H(+). In Salmonella enteritidis PT4 (strain P125109), this protein is Mannitol-1-phosphate 5-dehydrogenase.